The chain runs to 380 residues: Cytochrome b (380 aa).

4 helical membrane-spanning segments follow: residues 34–54 (FGSLLGLFLTMQIITGIILAM), 78–100 (WLMRTMHMNGAAFMFICMYAHMG), 113–133 (TWNIGIIIMIATMATAFMGYV), and 179–199 (FFAFHFVLPFVLIALSGVHLL). Residues His84 and His98 each coordinate heme b. His183 and His197 together coordinate heme b. His202 is an a ubiquinone binding site. 4 helical membrane passes run 225–245 (FSWKDLLGFAXMILIFCTITL), 289–309 (LGGVVALVGSLIIPATMMLTH), 324–344 (VIFWLFCANFIALSWIGAAPV), and 349–369 (ITLGQVFSMLYFLFFLTAPMI).

It belongs to the cytochrome b family. In terms of assembly, the main subunits of complex b-c1 are: cytochrome b, cytochrome c1 and the Rieske protein. Heme b serves as cofactor.

Its subcellular location is the mitochondrion inner membrane. Functionally, component of the ubiquinol-cytochrome c reductase complex (complex III or cytochrome b-c1 complex) that is part of the mitochondrial respiratory chain. The b-c1 complex mediates electron transfer from ubiquinol to cytochrome c. Contributes to the generation of a proton gradient across the mitochondrial membrane that is then used for ATP synthesis. In Xenoturbella bocki (Marine worm), this protein is Cytochrome b (mt:Cyt-b).